The sequence spans 1385 residues: Defecation cycle abnormal dec-7 (1385 aa).

The signal sequence occupies residues 1 to 19 (MWTARHAVALLVVLTYAYS). An N-linked (GlcNAc...) asparagine glycan is attached at asparagine 156. The tract at residues 234 to 262 (SQTNYGAPNYQQAGAQSAANQQFSNPSQY) is disordered. Positions 242-261 (NYQQAGAQSAANQQFSNPSQ) are enriched in low complexity. Positions 285–450 (QIYGKRKKRQ…GRWIHRVDEV (166 aa)) constitute an NIDO domain. Asparagine 313, asparagine 386, asparagine 413, asparagine 458, asparagine 480, asparagine 562, and asparagine 583 each carry an N-linked (GlcNAc...) asparagine glycan. Residues 681–840 (GRNWPIDMCI…DHCEFYYWRR (160 aa)) form the AMOP domain. The region spanning 852-1088 (AAGYIYGEPH…FWKIDGTNDK (237 aa)) is the VWFD domain. N-linked (GlcNAc...) asparagine glycans are attached at residues asparagine 909, asparagine 921, asparagine 975, asparagine 1009, and asparagine 1124. In terms of domain architecture, Sushi spans 1179-1238 (ISCGPLLKKEGVVKTPPAANYLDGDKVVFSCKPKYYIHGDIERVCRNGTWSPGWWAWCRD). Intrachain disulfides connect cysteine 1181-cysteine 1223 and cysteine 1209-cysteine 1236. N-linked (GlcNAc...) asparagine glycosylation occurs at asparagine 1225. A helical transmembrane segment spans residues 1251-1271 (LLSIFGISLIFVIFFCILWNI). The disordered stretch occupies residues 1321-1385 (MNQPSRPIPS…GNMRFETSAI (65 aa)).

In terms of tissue distribution, highly expressed in the intestinal epithelia.

It is found in the membrane. Its subcellular location is the cell junction. Functionally, may negatively regulate activity of innexin gap junction protein inx-16, thereby mediating the rhythmic frequency of the defecation motor program. Required for the clustering of inx-16 to the cell-cell junction of the intestinal epithelia. Probably dispensable for intestinal integrity. May be a cytokine receptor. This is Defecation cycle abnormal dec-7 from Caenorhabditis elegans.